Consider the following 316-residue polypeptide: SWR complex protein 2 (316 aa).

Disordered regions lie at residues 1–81, 93–127, and 153–180; these read MSAT…GEEV, KRKI…KKKY, and ETRL…TMTQ. Residues 20–31 show a composition bias toward basic and acidic residues; it reads KMRELLEKEHLR. The stretch at 20–95 forms a coiled coil; the sequence is KMRELLEKEH…RDEERIKKRK (76 aa). Positions 40–56 are enriched in acidic residues; it reads EKEDEEYNIEEEEEAER. Phosphoserine is present on residues Ser64 and Ser65. Positions 70-81 are enriched in basic and acidic residues; sequence ELKKLEEEGEEV. Residues 167–180 show a composition bias toward polar residues; it reads VSASANRQKGTMTQ.

It belongs to the VPS72/YL1 family. As to quaternary structure, component of the SWR1 chromatin-remodeling complex.

The protein localises to the nucleus. Its function is as follows. Participates in the catalytic exchange of histone H2A for the H2A variant pht1, an euchromatin-specific factor, leading to chromatin remodeling and changes in transcription of targeted genes. The chain is SWR complex protein 2 (swc2) from Schizosaccharomyces pombe (strain 972 / ATCC 24843) (Fission yeast).